The primary structure comprises 223 residues: Movement and silencing protein TGBp1 (223 aa).

The region spanning 1-136 is the (+)RNA virus helicase ATP-binding domain; it reads METVLSLLNE…QILRDLGYNI (136 aa). The 87-residue stretch at 137–223 folds into the (+)RNA virus helicase C-terminal domain; sequence ASSKEDIVEK…HRSKLVLVSN (87 aa).

Belongs to the Tymovirales TGBp1 protein family. As to quaternary structure, homodimer and homooligomer. Interacts with capsid protein. Interacts with host AGO1; this interaction targets the host protein for degradation, thereby suppressing the antiviral RNA silencing.

It localises to the host cytoplasm. Its function is as follows. Transports viral genome to neighboring plant cells directly through plasmosdesmata, without any budding. The movement protein allows efficient cell to cell propagation, by bypassing the host cell wall barrier. Increases plasmodesma size exclusion limit. Acts as a suppressor of RNA-mediated gene silencing, also known as post-transcriptional gene silencing (PTGS), a mechanism of plant viral defense that limits the accumulation of viral RNAs. The polypeptide is Movement and silencing protein TGBp1 (Crataegus (hawthorn)).